The chain runs to 400 residues: Nicotinate phosphoribosyltransferase (400 aa).

Residue histidine 220 is modified to Phosphohistidine; by autocatalysis.

The protein belongs to the NAPRTase family. In terms of processing, transiently phosphorylated on a His residue during the reaction cycle. Phosphorylation strongly increases the affinity for substrates and increases the rate of nicotinate D-ribonucleotide production. Dephosphorylation regenerates the low-affinity form of the enzyme, leading to product release.

It carries out the reaction nicotinate + 5-phospho-alpha-D-ribose 1-diphosphate + ATP + H2O = nicotinate beta-D-ribonucleotide + ADP + phosphate + diphosphate. It functions in the pathway cofactor biosynthesis; NAD(+) biosynthesis; nicotinate D-ribonucleotide from nicotinate: step 1/1. Its function is as follows. Catalyzes the synthesis of beta-nicotinate D-ribonucleotide from nicotinate and 5-phospho-D-ribose 1-phosphate at the expense of ATP. The protein is Nicotinate phosphoribosyltransferase of Salmonella typhimurium (strain LT2 / SGSC1412 / ATCC 700720).